We begin with the raw amino-acid sequence, 392 residues long: uncharacterized protein (392 aa).

Belongs to the chlamydial CPn_0675/CT_696/TC_0068 family.

This is an uncharacterized protein from Chlamydia trachomatis serovar D (strain ATCC VR-885 / DSM 19411 / UW-3/Cx).